The following is an 89-amino-acid chain: Small ribosomal subunit protein uS19 (89 aa).

It belongs to the universal ribosomal protein uS19 family.

In terms of biological role, protein S19 forms a complex with S13 that binds strongly to the 16S ribosomal RNA. The sequence is that of Small ribosomal subunit protein uS19 from Rhodopirellula baltica (strain DSM 10527 / NCIMB 13988 / SH1).